Consider the following 884-residue polypeptide: uncharacterized protein (884 aa).

This is an uncharacterized protein from Mycobacterium bovis (strain ATCC BAA-935 / AF2122/97).